A 502-amino-acid polypeptide reads, in one-letter code: MGNFLYFSAETWTLLVAFITLLLVYAYWPYGTFKRLGIPGPKPVPFFGTMLAYRKGFFNFDDECRKKYGKTWGIYDGRQPVLCITDPATIKAVLVKECYSLFTNRRNFRLNGPLYDAVSIAEDDQWKRIRSVLSPSFTSGRLKEMFDIMKHHSANLIQSMKKKVDKDEPLEMKEYFGPYSMDVVTSTAFSVDIDSLNNPSDPFVTNIKKMLKFDFLNPLFLAVAFFPFLGPILEKFEFSLFPSSVMDFFFAALRKIKANHENNKQKSRIDFLQLMIDSQKNNQNGLQDKGLSDHEILSQAMIFIFAGYETTSSSLTFLAYNLATNPEVMKKLQKEIDATFPNKAPVQYVPLMEMEYLDCVVNESLRLYPIAARLERVAKATVEVNGLVIPKDMVVMVPTWPLHRDPELWPEPEKFKPERFSKENKDTFDPYTYMPFGAGPRNCIGMRFALVMMKLAVVEILQTYDFSVCKETEVPFEMDVQGFLAPKRPIQLKLTPRSASSS.

Cysteine 443 serves as a coordination point for heme.

This sequence belongs to the cytochrome P450 family. Requires heme as cofactor.

It is found in the endoplasmic reticulum membrane. Its subcellular location is the microsome membrane. It carries out the reaction an organic molecule + reduced [NADPH--hemoprotein reductase] + O2 = an alcohol + oxidized [NADPH--hemoprotein reductase] + H2O + H(+). This Oryzias latipes (Japanese rice fish) protein is Cytochrome P450 3A40 (cyp3a40).